Reading from the N-terminus, the 692-residue chain is Elongation factor G (692 aa).

The tr-type G domain maps to 8-282 (EKVRNIGIAA…AVVDYLPAPT (275 aa)). GTP-binding positions include 17–24 (AHIDAGKT), 81–85 (DTPGH), and 135–138 (NKMD).

The protein belongs to the TRAFAC class translation factor GTPase superfamily. Classic translation factor GTPase family. EF-G/EF-2 subfamily.

The protein localises to the cytoplasm. In terms of biological role, catalyzes the GTP-dependent ribosomal translocation step during translation elongation. During this step, the ribosome changes from the pre-translocational (PRE) to the post-translocational (POST) state as the newly formed A-site-bound peptidyl-tRNA and P-site-bound deacylated tRNA move to the P and E sites, respectively. Catalyzes the coordinated movement of the two tRNA molecules, the mRNA and conformational changes in the ribosome. In Trichormus variabilis (strain ATCC 29413 / PCC 7937) (Anabaena variabilis), this protein is Elongation factor G.